The sequence spans 486 residues: Bile acid receptor (486 aa).

K132 participates in a covalent cross-link: Glycyl lysine isopeptide (Lys-Gly) (interchain with G-Cter in SUMO1). Residues 134-209 (DELCVVCGDR…MGMLAECMYT (76 aa)) constitute a DNA-binding region (nuclear receptor). The segment at 137 to 157 (CVVCGDRASGYHYNALTCEGC) adopts an NR C4-type zinc-finger fold. Phosphoserine; by PKC/PRKCA occurs at positions 145 and 164. Position 167 is an N6-acetyllysine; by EP300 (K167). The segment at 173–197 (CKNGGNCVMDMYMRRKCQECRLRKC) adopts an NR C4-type zinc-finger fold. The residue at position 220 (K220) is an N6-methyllysine; by SETD7. K227 is subject to N6-acetyllysine; by EP300. The region spanning 262 to 486 (DQQTLLHFIM…PLLCEIWDVQ (225 aa)) is the NR LBD domain. A Glycyl lysine isopeptide (Lys-Gly) (interchain with G-Cter in SUMO1) cross-link involves residue K289. Residues R345, Y375, and Y383 each contribute to the chenodeoxycholate site. T456 carries the phosphothreonine; by PKC/PRKCZ modification. H461 lines the chenodeoxycholate pocket.

It belongs to the nuclear hormone receptor family. NR1 subfamily. In terms of assembly, heterodimer (via C-terminus) with RXRA (via DBD); the heterodimerization enhances the binding affinity for LXXLL motifs from coactivators. Binds DNA predominantly as a heterodimer with RXRA. After activation by agonist binding interacts with coactivators. Interacts with NCOA1, NCOA2, PPARGC1A, CARM1, SETD7, PRMT1, GPS2, SMARCA4 and MED1. Interacts with EP300 and SMARCD1. Interacts with XRCC5 and XRCC6; decreasing NR1H4/FXR transactivation activity towards ABCB11/BSEP. Interacts with PAGR1 and NCOA6; indicative for an association with an MLL2/MLL3 complex (ASCOM). Post-translationally, acetylated by EP300. Lys-227 as is the major acetylation site for EP300; the dynamicly regulated acetylation inhibits heterodimerization with RXRA and transactivation activity. Deacetylated by SIRT1. Methylation may increase transactivation of target genes. In terms of processing, phosphorylation by PKC/PRKCA increases transactivation activity by promoting association with PPARGC1A. Post-translationally, sumoylated upon ligand binding. As to expression, liver and hepatocyte-related cells express mainly FXRalpha1-type isoforms with isoform 3 and isoform 4 in approximately equal proportions. In intestine and kidney mainly FXRalpha2-type isoforms are expressed with isoform 1 and isoform 2 in approximately equal proportions. Expressed in pancreatic beta cells and macrophages.

It is found in the nucleus. Functionally, ligand-activated transcription factor. Receptor for bile acids (BAs) such as chenodeoxycholic acid (CDCA), lithocholic acid, deoxycholic acid (DCA) and allocholic acid (ACA). Plays a essential role in BA homeostasis through the regulation of genes involved in BA synthesis, conjugation and enterohepatic circulation. Also regulates lipid and glucose homeostasis and is involved innate immune response. The FXR-RXR heterodimer binds predominantly to farnesoid X receptor response elements (FXREs) containing two inverted repeats of the consensus sequence 5'-AGGTCA-3' in which the monomers are spaced by 1 nucleotide (IR-1) but also to tandem repeat DR1 sites with lower affinity, and can be activated by either FXR or RXR-specific ligands. It is proposed that monomeric nuclear receptors such as NR5A2/LRH-1 bound to coregulatory nuclear responsive element (NRE) halfsites located in close proximity to FXREs modulate transcriptional activity. In the liver activates transcription of the corepressor NR0B2 thereby indirectly inhibiting CYP7A1 and CYP8B1 (involved in BA synthesis) implicating at least in part histone demethylase KDM1A resulting in epigenomic repression, and SLC10A1/NTCP (involved in hepatic uptake of conjugated BAs). Activates transcription of the repressor MAFG (involved in regulation of BA synthesis). Activates transcription of SLC27A5/BACS and BAAT (involved in BA conjugation), ABCB11/BSEP (involved in bile salt export) by directly recruiting histone methyltransferase CARM1, and ABCC2/MRP2 (involved in secretion of conjugated BAs) and ABCB4 (involved in secretion of phosphatidylcholine in the small intestine). Activates transcription of SLC27A5/BACS and BAAT (involved in BA conjugation), ABCB11/BSEP (involved in bile salt export) by directly recruiting histone methyltransferase CARM1, and ABCC2/MRP2 (involved in secretion of conjugated BAs) and ABCB4 (involved in secretion of phosphatidylcholine in the small intestine). In the intestine activates FGF19 expression and secretion leading to hepatic CYP7A1 repression. The function also involves the coordinated induction of hepatic KLB/beta-klotho expression. Regulates transcription of liver UGT2B4 and SULT2A1 involved in BA detoxification; binding to the UGT2B4 promoter seems to imply a monomeric transactivation independent of RXRA. Modulates lipid homeostasis by activating liver NR0B2/SHP-mediated repression of SREBF1 (involved in de novo lipogenesis), expression of PLTP (involved in HDL formation), SCARB1 (involved in HDL hepatic uptake), APOE, APOC1, APOC4, PPARA (involved in beta-oxidation of fatty acids), VLDLR and SDC1 (involved in the hepatic uptake of LDL and IDL remnants), and inhibiting expression of MTTP (involved in VLDL assembly. Increases expression of APOC2 (promoting lipoprotein lipase activity implicated in triglyceride clearance). Transrepresses APOA1 involving a monomeric competition with NR2A1 for binding to a DR1 element. Also reduces triglyceride clearance by inhibiting expression of ANGPTL3 and APOC3 (both involved in inhibition of lipoprotein lipase). Involved in glucose homeostasis by modulating hepatic gluconeogenesis through activation of NR0B2/SHP-mediated repression of respective genes. Modulates glycogen synthesis (inducing phosphorylation of glycogen synthase kinase-3). Modulates glucose-stimulated insulin secretion and is involved in insulin resistance. Involved in intestinal innate immunity. Plays a role in protecting the distal small intestine against bacterial overgrowth and preservation of the epithelial barrier. Down-regulates inflammatory cytokine expression in several types of immune cells including macrophages and mononuclear cells. Mediates trans-repression of TLR4-induced cytokine expression; the function seems to require its sumoylation and prevents N-CoR nuclear receptor corepressor clearance from target genes such as IL1B and NOS2. Involved in the TLR9-mediated protective mechanism in intestinal inflammation. Plays an anti-inflammatory role in liver inflammation; proposed to inhibit pro-inflammatory (but not antiapoptotic) NF-kappa-B signaling). In terms of biological role, promotes transcriptional activation of target genes NR0B2/SHP (inducible by unconjugated CDCA), SLC51B/OSTB (inducible by unconjugated CDCA and DCA) and FABP6/IBAP; low activity for ABCB11/BSEP (inducible by unconjugated CDCA, DCA and ACA); not inducible by taurine- and glycine-amidated CDCA. Promotes transcriptional activation of target genes ABCB11/BSEP (inducible by unconjugated CDCA, DCA and ACA), NR0B2/SHP (inducible by unconjugated CDCA DCA and ACA), SLC51B/OSTB (inducible by unconjugated CDCA and DCA) and FABP6/IBAP; not inducible by taurine- and glycine-amidated CDCA. Its function is as follows. Promotes transcriptional activation of target genes NR0B2/SHP (inducible by unconjugated CDCA), SLC51B/OSTB (inducible by unconjugated CDCA and DCA) and IBAP; low activity for ABCB11/BSEP (inducible by unconjugated CDCA, DCA and ACA); not inducible by taurine- and glycine-amidated CDCA. Functionally, promotes transcriptional activation of target genes ABCB11/BSEP (inducible by unconjugated CDCA, ACA and DCA), NR0B2/SHP (inducible by unconjugated CDCA, ACA and DCA), SLC51B/OSTB (inducible by unconjugated CDCA and DCA) and FABP6/IBAP; most efficient isoform compared to isoforms 1 to 3; not inducible by taurine- and glycine-amidated CDCA. In Homo sapiens (Human), this protein is Bile acid receptor (NR1H4).